Consider the following 277-residue polypeptide: Undecaprenyl-diphosphatase (277 aa).

Helical transmembrane passes span 47–67 (FNIIIQLAAILAVVWEFRGKI), 85–105 (ANLLIAFFPAVVLGVLFADLI), 108–128 (WLFNPITVALALVVGGVVMLW), 183–203 (AATEFSFFLAMPTMVGAAVYS), 218–238 (VFAVGFVTSFVFAMVAVRALL), and 249–269 (FAWYRIAFGLLILATWQFHLI).

It belongs to the UppP family.

It is found in the cell inner membrane. The enzyme catalyses di-trans,octa-cis-undecaprenyl diphosphate + H2O = di-trans,octa-cis-undecaprenyl phosphate + phosphate + H(+). In terms of biological role, catalyzes the dephosphorylation of undecaprenyl diphosphate (UPP). Confers resistance to bacitracin. The protein is Undecaprenyl-diphosphatase of Pseudomonas aeruginosa (strain UCBPP-PA14).